The chain runs to 694 residues: GRB2-associated-binding protein 1 (694 aa).

Residue S2 is modified to N-acetylserine. Positions 5–116 (EVVCSGWLRK…WVRCICDICG (112 aa)) constitute a PH domain. 2 disordered regions span residues 122–164 (EDPV…PYQL) and 194–231 (PEPT…SKHG). Over residues 145 to 157 (APPSTQADSSSAT) the composition is skewed to polar residues. The segment covering 194–203 (PEPTRTHADS) has biased composition (basic and acidic residues). Over residues 204–231 (AKSTSSETDCNDNVPSHKNPASSQSKHG) the composition is skewed to polar residues. A phosphoserine mark is found at S251, S253, S266, and S304. Residues 323–386 (FPEGTLGQTS…TAGMSPSRSN (64 aa)) form a disordered region. A compositionally biased stretch (polar residues) spans 362-386 (IPRTASDTDSSYCIPTAGMSPSRSN). T387 carries the phosphothreonine modification. Phosphoserine occurs at positions 402 and 454. 2 disordered regions span residues 493 to 532 (AHMG…VKPA) and 544 to 656 (ELQA…ADER). Position 547 is a phosphoserine (A547). The segment covering 594–611 (PNLSSEDPNLFGSNSLDG) has biased composition (polar residues). A Phosphotyrosine modification is found at Y627. Position 638 is a phosphothreonine (T638). S651 carries the phosphoserine modification. Y659 bears the Phosphotyrosine mark. The disordered stretch occupies residues 671 to 694 (KSTREAWTDGRQSTESETPAKSVK). The span at 672–684 (STREAWTDGRQST) shows a compositional bias: basic and acidic residues. S683 is modified (phosphoserine). Over residues 685 to 694 (ESETPAKSVK) the composition is skewed to polar residues.

It belongs to the GAB family. In terms of assembly, identified in a complex containing FRS2, GRB2, GAB1, PIK3R1 and SOS1. Forms a tripartite complex containing GAB1, METTL13 and SPRY2. Within the complex interacts with METTL13. Interacts with GRB2 and with other SH2-containing proteins. Interacts with phosphorylated LAT2. Interacts with PTPRJ. Interacts (phosphorylated) with PTPN11. Interacts with HCK. In terms of processing, phosphorylated in response to FGFR1 activation. Phosphorylated on tyrosine residue(s) by the epidermal growth factor receptor (EGFR) and the insulin receptor (INSR). Tyrosine phosphorylation of GAB1 mediates interaction with several proteins that contain SH2 domains. Phosphorylated on tyrosine residues by HCK upon IL6 signaling.

In terms of biological role, adapter protein that plays a role in intracellular signaling cascades triggered by activated receptor-type kinases. Plays a role in FGFR1 signaling. Probably involved in signaling by the epidermal growth factor receptor (EGFR) and the insulin receptor (INSR). Involved in the MET/HGF-signaling pathway. The polypeptide is GRB2-associated-binding protein 1 (GAB1) (Homo sapiens (Human)).